The chain runs to 454 residues: tRNA modification GTPase MnmE (454 aa).

Arg-23, Glu-86, and Arg-125 together coordinate (6S)-5-formyl-5,6,7,8-tetrahydrofolate. The TrmE-type G domain occupies 221–376; that stretch reads GLTLAIVGRP…LREQILRMVS (156 aa). Asn-231 serves as a coordination point for K(+). Residues 231-236, 250-256, and 275-278 contribute to the GTP site; these read NVGKSS, TAIPGTT, and DTAG. Ser-235 serves as a coordination point for Mg(2+). Thr-250, Ile-252, and Thr-255 together coordinate K(+). Position 256 (Thr-256) interacts with Mg(2+). Lys-454 is a binding site for (6S)-5-formyl-5,6,7,8-tetrahydrofolate.

Belongs to the TRAFAC class TrmE-Era-EngA-EngB-Septin-like GTPase superfamily. TrmE GTPase family. As to quaternary structure, homodimer. Heterotetramer of two MnmE and two MnmG subunits. The cofactor is K(+).

The protein resides in the cytoplasm. Its function is as follows. Exhibits a very high intrinsic GTPase hydrolysis rate. Involved in the addition of a carboxymethylaminomethyl (cmnm) group at the wobble position (U34) of certain tRNAs, forming tRNA-cmnm(5)s(2)U34. The chain is tRNA modification GTPase MnmE from Koribacter versatilis (strain Ellin345).